We begin with the raw amino-acid sequence, 87 residues long: Small ribosomal subunit protein uS17 (87 aa).

It belongs to the universal ribosomal protein uS17 family. Part of the 30S ribosomal subunit.

In terms of biological role, one of the primary rRNA binding proteins, it binds specifically to the 5'-end of 16S ribosomal RNA. The protein is Small ribosomal subunit protein uS17 of Lacticaseibacillus casei (strain BL23) (Lactobacillus casei).